Consider the following 196-residue polypeptide: DnaA initiator-associating protein DiaA (196 aa).

Residues 34–196 (LVHSLLNGNK…DNTLFLHQDD (163 aa)) enclose the SIS domain.

It belongs to the SIS family. DiaA subfamily. In terms of assembly, homotetramer; dimer of dimers.

In terms of biological role, required for the timely initiation of chromosomal replication via direct interactions with the DnaA initiator protein. This Salmonella paratyphi A (strain ATCC 9150 / SARB42) protein is DnaA initiator-associating protein DiaA.